The chain runs to 237 residues: MRKVTLTLSAIALALSLNGAAMAKVHMPEVVSPGVTVTELAHQQPIKWVSVAEIEKSLEGQAPMAVGFDIDDTVLFSSPGFYRGKLEYSPNDFSYLKNPEFWEKMNNEWDKFSMPKQVGIDLVQMHLKRGDTVYFITGRTQTKTETVTKYVQEGLNIPADKMQPVIFAGDQPGANNKVSWMRDHKLKIYYGDADADIAAADELNIRGIRILRAANSSYQPLPKAGQFGEEVVINSEY.

The first 23 residues, Met1–Ala23, serve as a signal peptide directing secretion. The active-site Nucleophile is Asp69. Mg(2+)-binding residues include Asp69 and Asp71. Asp71 serves as the catalytic Proton donor. Substrate is bound by residues Thr137 to Gly138 and Lys177. Asp192 contributes to the Mg(2+) binding site.

This sequence belongs to the class B bacterial acid phosphatase family. As to quaternary structure, homotetramer. The cofactor is Mg(2+).

The protein localises to the periplasm. It carries out the reaction a phosphate monoester + H2O = an alcohol + phosphate. Its function is as follows. Dephosphorylates several organic phosphate monoesters. Also has a phosphotransferase activity catalyzing the transfer of low-energy phosphate groups from organic phosphate monoesters to free hydroxyl groups of various organic compounds. The polypeptide is Class B acid phosphatase (Proteus mirabilis (strain HI4320)).